A 391-amino-acid polypeptide reads, in one-letter code: PPE family protein PPE18 (391 aa).

It belongs to the mycobacterial PPE family. In terms of assembly, interacts with human TLR2.

It is found in the secreted. It localises to the cell wall. The protein localises to the cell surface. Its function is as follows. Could be a crucial virulence factor for intracellular survival of M.tuberculosis. Favors development of Th2-type response, and down-regulates the pro-inflammatory and Th1-type response. Specifically interacts with the human Toll-like receptor 2 (TLR2), leading to an early and sustained activation of p38 MAPK, which induces IL-10 production and activates Th2-type immune response. Also inhibits pro-inflammatory cytokines IL-12p40 and TNF-alpha production. Acts by up-regulating the expression as well as tyrosine phosphorylation of suppressor of cytokine signaling 3 (SOCS-3), leading to the inhibition of phosphorylation of I-kappa-B-alpha, thereby preventing nuclear translocation of the NF-kappa-B/REL subunits and expression of NF-kappa-B regulated genes like IL-12 and TNF-alpha. Induction of SOCS-3 probably depends on the activation of p38 MAPK. The chain is PPE family protein PPE18 from Mycobacterium tuberculosis (strain ATCC 25618 / H37Rv).